Here is a 136-residue protein sequence, read N- to C-terminus: 6,7-dimethyl-8-ribityllumazine synthase (136 aa).

Residues Phe-11, 43-45 (SFD), and 67-69 (AVI) each bind 5-amino-6-(D-ribitylamino)uracil. 72–73 (ET) serves as a coordination point for (2S)-2-hydroxy-3-oxobutyl phosphate. Residue His-75 is the Proton donor of the active site. Residue Leu-100 coordinates 5-amino-6-(D-ribitylamino)uracil. Position 115 (Arg-115) interacts with (2S)-2-hydroxy-3-oxobutyl phosphate.

Belongs to the DMRL synthase family.

The catalysed reaction is (2S)-2-hydroxy-3-oxobutyl phosphate + 5-amino-6-(D-ribitylamino)uracil = 6,7-dimethyl-8-(1-D-ribityl)lumazine + phosphate + 2 H2O + H(+). The protein operates within cofactor biosynthesis; riboflavin biosynthesis; riboflavin from 2-hydroxy-3-oxobutyl phosphate and 5-amino-6-(D-ribitylamino)uracil: step 1/2. Functionally, catalyzes the formation of 6,7-dimethyl-8-ribityllumazine by condensation of 5-amino-6-(D-ribitylamino)uracil with 3,4-dihydroxy-2-butanone 4-phosphate. This is the penultimate step in the biosynthesis of riboflavin. The chain is 6,7-dimethyl-8-ribityllumazine synthase from Picrophilus torridus (strain ATCC 700027 / DSM 9790 / JCM 10055 / NBRC 100828 / KAW 2/3).